The primary structure comprises 645 residues: Serine/threonine-protein kinase Nek11 (645 aa).

A Protein kinase domain is found at 29–287 (YVLQQKLGSG…AIEILKIPYL (259 aa)). ATP is bound by residues 35–43 (LGSGSFGTV) and Lys-61. Catalysis depends on Asp-158, which acts as the Proton acceptor. Ser-273 carries the post-translational modification Phosphoserine; by CHEK1. The stretch at 346-385 (RLRKLQAADEKARKLKKIVEEKYEENSKRMQELRSRNFQQ) forms a coiled coil. The tract at residues 399 to 445 (GMEEKEEQPEGRLSCSPQDEDEERWQGREEESDEPTLENLPESQPIP) is disordered.

It belongs to the protein kinase superfamily. NEK Ser/Thr protein kinase family. NIMA subfamily. In terms of assembly, interacts with isoform 1 of NEK2. Requires Mn(2+) as cofactor. Mg(2+) is required as a cofactor. Post-translationally, phosphorylated by NEK2. Phosphorylation at Ser-273 is important for its activation. As to expression, poorly expressed in cerebellum, trachea, lung, appendix, and uterus.

It localises to the nucleus. It is found in the nucleolus. The enzyme catalyses L-seryl-[protein] + ATP = O-phospho-L-seryl-[protein] + ADP + H(+). The catalysed reaction is L-threonyl-[protein] + ATP = O-phospho-L-threonyl-[protein] + ADP + H(+). With respect to regulation, autorepressed by intramolecular binding of the C-terminus which dissociates following phosphorylation by NEK2 isoform 1 in G1/S-arrested cells. NEK2 isoform 2 is largely not present in the nucleolus, and does not appear to phosphorylate NEK11. Activated in response to DNA damage. Inhibited by zinc. Protein kinase which plays an important role in the G2/M checkpoint response to DNA damage. Controls degradation of CDC25A by directly phosphorylating it on residues whose phosphorylation is required for BTRC-mediated polyubiquitination and degradation. The chain is Serine/threonine-protein kinase Nek11 from Homo sapiens (Human).